An 876-amino-acid polypeptide reads, in one-letter code: Liprin-beta-2 (876 aa).

Residues 101–313 adopt a coiled-coil conformation; the sequence is AASNETYQER…TGLLNQYRKV (213 aa). Phosphoserine occurs at positions 329, 363, and 387. The tract at residues 356-376 is disordered; sequence EMPPRCSSPTVGPPPLPQKSL. Disordered regions lie at residues 425–451 and 470–500; these read LPGK…PDAT and VVND…PKGI. The span at 473-489 shows a compositional bias: polar residues; the sequence is DLSSTSSGTESGPQSPL. Ser-512 is subject to Phosphoserine. The disordered stretch occupies residues 527-553; it reads RGGLRATAGPRLSRTRDSKGQKSDANA. SAM domains follow at residues 558–622, 630–693, and 718–783; these read WSTE…INTK, LDHI…LHVN, and WSNH…KFNA.

This sequence belongs to the liprin family. Liprin-beta subfamily. As to quaternary structure, forms homodimers and heterodimers. As to expression, widely expressed.

May regulate the disassembly of focal adhesions. Did not bind receptor-like tyrosine phosphatases type 2A. The protein is Liprin-beta-2 (PPFIBP2) of Homo sapiens (Human).